Reading from the N-terminus, the 98-residue chain is MIKARYFYLYKLIVRCRFFIAKYNTLFKQQVIEFYIQNGKNYSLISKHFQLDSRTLRHWINQFNHSRINGLAVLGKTRNYSLKFKLNVIQTVKNGQFL.

It belongs to the IS150/IS1296 orfA family.

This is an uncharacterized protein from Haemophilus influenzae (strain ATCC 51907 / DSM 11121 / KW20 / Rd).